The primary structure comprises 103 residues: Large ribosomal subunit protein bL21 (103 aa).

The protein belongs to the bacterial ribosomal protein bL21 family. As to quaternary structure, part of the 50S ribosomal subunit. Contacts protein L20.

Functionally, this protein binds to 23S rRNA in the presence of protein L20. This is Large ribosomal subunit protein bL21 from Bordetella parapertussis (strain 12822 / ATCC BAA-587 / NCTC 13253).